An 81-amino-acid polypeptide reads, in one-letter code: Control protein C.BamHI (81 aa).

The HTH cro/C1-type domain maps to 13–68; it reads VRQIRLSKSNMSQEKLAFECDLHRTYISDIERGTRNVSLDNIEKISKALGVQPKDL. The H-T-H motif DNA-binding region spans 25–44; that stretch reads QEKLAFECDLHRTYISDIER.

In terms of biological role, may help modulate methylase (M) and restriction enzyme (R) expression as cells undergo physiological changes such as sporulation or transformation. The chain is Control protein C.BamHI from Bacillus amyloliquefaciens (Bacillus velezensis).